A 94-amino-acid chain; its full sequence is Phosphoribosyl-ATP pyrophosphatase (94 aa).

It belongs to the PRA-PH family.

It localises to the cytoplasm. It carries out the reaction 1-(5-phospho-beta-D-ribosyl)-ATP + H2O = 1-(5-phospho-beta-D-ribosyl)-5'-AMP + diphosphate + H(+). The protein operates within amino-acid biosynthesis; L-histidine biosynthesis; L-histidine from 5-phospho-alpha-D-ribose 1-diphosphate: step 2/9. The protein is Phosphoribosyl-ATP pyrophosphatase (hisE) of Pyrobaculum aerophilum (strain ATCC 51768 / DSM 7523 / JCM 9630 / CIP 104966 / NBRC 100827 / IM2).